We begin with the raw amino-acid sequence, 302 residues long: L-threonate dehydrogenase (302 aa).

Residues 7–35 (FHVG…TWGA) and Thr-102 each bind NAD(+). Lys-178 is an active-site residue. Position 246 (Lys-246) interacts with NAD(+).

It belongs to the HIBADH-related family. L-threonate dehydrogenase subfamily.

The catalysed reaction is L-threonate + NAD(+) = 2-dehydro-L-erythronate + NADH + H(+). Catalyzes oxidation of L-threonate to 2-oxo-tetronate. Can use either NAD(+) or NADP(+) as cosubstrate, with a preference for NAD(+). In Escherichia coli (strain K12), this protein is L-threonate dehydrogenase.